The primary structure comprises 76 residues: Acyl carrier protein (76 aa).

Residues Met-1–Thr-74 form the Carrier domain. Ser-34 carries the post-translational modification O-(pantetheine 4'-phosphoryl)serine.

The protein belongs to the acyl carrier protein (ACP) family. In terms of processing, 4'-phosphopantetheine is transferred from CoA to a specific serine of apo-ACP by AcpS. This modification is essential for activity because fatty acids are bound in thioester linkage to the sulfhydryl of the prosthetic group.

It is found in the cytoplasm. The protein operates within lipid metabolism; fatty acid biosynthesis. Functionally, carrier of the growing fatty acid chain in fatty acid biosynthesis. This Clostridium perfringens (strain ATCC 13124 / DSM 756 / JCM 1290 / NCIMB 6125 / NCTC 8237 / Type A) protein is Acyl carrier protein.